The following is a 130-amino-acid chain: Fumarate reductase subunit C (130 aa).

Helical transmembrane passes span 30–50 (EGTS…VFAL), 60–80 (FVSF…LFAA), and 110–130 (IKAL…VALL).

This sequence belongs to the FrdC family. Part of an enzyme complex containing four subunits: a flavoprotein (FrdA), an iron-sulfur protein (FrdB), and two hydrophobic anchor proteins (FrdC and FrdD).

It localises to the cell inner membrane. Its function is as follows. Two distinct, membrane-bound, FAD-containing enzymes are responsible for the catalysis of fumarate and succinate interconversion; fumarate reductase is used in anaerobic growth, and succinate dehydrogenase is used in aerobic growth. Anchors the catalytic components of the fumarate reductase complex to the cell inner membrane, binds quinones. This chain is Fumarate reductase subunit C, found in Yersinia pseudotuberculosis serotype O:1b (strain IP 31758).